The primary structure comprises 317 residues: Putative HTH-type transcriptional regulatory protein TGAM_1316 (317 aa).

The region spanning 131–189 (LKKLREKHGYSVGELASLLGVSRKSLLNYERNEQAVSLEVALRMEELFDEPIAEPIDVL) is the HTH cro/C1-type domain. The segment at residues 142–161 (VGELASLLGVSRKSLLNYER) is a DNA-binding region (H-T-H motif).

This Thermococcus gammatolerans (strain DSM 15229 / JCM 11827 / EJ3) protein is Putative HTH-type transcriptional regulatory protein TGAM_1316.